A 438-amino-acid chain; its full sequence is 3-phosphoshikimate 1-carboxyvinyltransferase (438 aa).

Residues K26, S27, and R31 each contribute to the 3-phosphoshikimate site. K26 is a phosphoenolpyruvate binding site. Phosphoenolpyruvate contacts are provided by G99 and R127. 3-phosphoshikimate-binding residues include S170, S171, Q172, S199, E314, and H343. Phosphoenolpyruvate is bound at residue Q172. E314 acts as the Proton acceptor in catalysis. Phosphoenolpyruvate is bound by residues R347, R388, and K413.

The protein belongs to the EPSP synthase family. In terms of assembly, monomer.

The protein localises to the cytoplasm. The catalysed reaction is 3-phosphoshikimate + phosphoenolpyruvate = 5-O-(1-carboxyvinyl)-3-phosphoshikimate + phosphate. Its pathway is metabolic intermediate biosynthesis; chorismate biosynthesis; chorismate from D-erythrose 4-phosphate and phosphoenolpyruvate: step 6/7. In terms of biological role, catalyzes the transfer of the enolpyruvyl moiety of phosphoenolpyruvate (PEP) to the 5-hydroxyl of shikimate-3-phosphate (S3P) to produce enolpyruvyl shikimate-3-phosphate and inorganic phosphate. The sequence is that of 3-phosphoshikimate 1-carboxyvinyltransferase from Mycobacterium sp. (strain MCS).